The primary structure comprises 577 residues: Proline--tRNA ligase (577 aa).

It belongs to the class-II aminoacyl-tRNA synthetase family. ProS type 1 subfamily. Homodimer.

It is found in the cytoplasm. The enzyme catalyses tRNA(Pro) + L-proline + ATP = L-prolyl-tRNA(Pro) + AMP + diphosphate. Its function is as follows. Catalyzes the attachment of proline to tRNA(Pro) in a two-step reaction: proline is first activated by ATP to form Pro-AMP and then transferred to the acceptor end of tRNA(Pro). As ProRS can inadvertently accommodate and process non-cognate amino acids such as alanine and cysteine, to avoid such errors it has two additional distinct editing activities against alanine. One activity is designated as 'pretransfer' editing and involves the tRNA(Pro)-independent hydrolysis of activated Ala-AMP. The other activity is designated 'posttransfer' editing and involves deacylation of mischarged Ala-tRNA(Pro). The misacylated Cys-tRNA(Pro) is not edited by ProRS. The sequence is that of Proline--tRNA ligase from Chlamydia abortus (strain DSM 27085 / S26/3) (Chlamydophila abortus).